Here is a 150-residue protein sequence, read N- to C-terminus: Large ribosomal subunit protein uL13 (150 aa).

Residues 129–150 (TEHPHAAQKPQPLQLNPSASAQ) are disordered. The span at 139-150 (QPLQLNPSASAQ) shows a compositional bias: polar residues.

The protein belongs to the universal ribosomal protein uL13 family. As to quaternary structure, part of the 50S ribosomal subunit.

In terms of biological role, this protein is one of the early assembly proteins of the 50S ribosomal subunit, although it is not seen to bind rRNA by itself. It is important during the early stages of 50S assembly. This chain is Large ribosomal subunit protein uL13, found in Synechococcus sp. (strain CC9605).